A 183-amino-acid polypeptide reads, in one-letter code: MKLIVVAALIGVCAGGALPGHVAPQYYYGGPGYYPHGRPSPGVERNAAILRSDSEVTSQGFQYVYDTENGIHGEAAGVEANGIQSQGAFSYTGDDGQQYAVKYTADANGFQAQGAHLPTPPPIPDAIVRSIEENARAEAAGVYNEGSYNVYNNQAAFANRHQYPYQYQSNRPYNTLGYHGYKY.

The N-terminal stretch at 1–15 is a signal peptide; it reads MKLIVVAALIGVCAG. The Chitin-binding type R&amp;R domain occupies 58–121; that stretch reads SQGFQYVYDT…AQGAHLPTPP (64 aa).

The protein is Cuticle protein 2 of Lonomia obliqua (Moth).